The primary structure comprises 388 residues: 1-deoxy-D-xylulose 5-phosphate reductoisomerase (388 aa).

NADPH contacts are provided by Thr10, Gly11, Ser12, Ile13, Lys37, Asn38, and Asn123. Lys124 provides a ligand contact to 1-deoxy-D-xylulose 5-phosphate. Position 125 (Glu125) interacts with NADPH. Asp149 provides a ligand contact to Mn(2+). Residues Ser150, Glu151, Ser175, and His198 each contribute to the 1-deoxy-D-xylulose 5-phosphate site. Glu151 serves as a coordination point for Mn(2+). Gly204 is a binding site for NADPH. 1-deoxy-D-xylulose 5-phosphate contacts are provided by Ser211, Asn216, Lys217, and Glu220. Glu220 is a Mn(2+) binding site.

The protein belongs to the DXR family. Mg(2+) serves as cofactor. It depends on Mn(2+) as a cofactor.

It catalyses the reaction 2-C-methyl-D-erythritol 4-phosphate + NADP(+) = 1-deoxy-D-xylulose 5-phosphate + NADPH + H(+). The protein operates within isoprenoid biosynthesis; isopentenyl diphosphate biosynthesis via DXP pathway; isopentenyl diphosphate from 1-deoxy-D-xylulose 5-phosphate: step 1/6. Its function is as follows. Catalyzes the NADPH-dependent rearrangement and reduction of 1-deoxy-D-xylulose-5-phosphate (DXP) to 2-C-methyl-D-erythritol 4-phosphate (MEP). This Pelagibacter ubique (strain HTCC1062) protein is 1-deoxy-D-xylulose 5-phosphate reductoisomerase.